We begin with the raw amino-acid sequence, 420 residues long: Phytoene synthase 1, chloroplastic (420 aa).

The transit peptide at 1–70 (MAAITLLRSA…GEIARTSPVY (70 aa)) directs the protein to the chloroplast.

It belongs to the phytoene/squalene synthase family. Expressed in leaves. Highly expressed in developing leaves. Expressed at low levels in roots.

It localises to the plastid. It is found in the chloroplast membrane. The protein localises to the chloroplast. The protein resides in the plastoglobule. The enzyme catalyses 2 (2E,6E,10E)-geranylgeranyl diphosphate = 15-cis-phytoene + 2 diphosphate. Its function is as follows. Catalyzes the conversion of geranylgeranyl diphosphate to phytoene. Mediates the first committed step in carotenoid biosynthesis. The polypeptide is Phytoene synthase 1, chloroplastic (Oryza sativa subsp. japonica (Rice)).